Consider the following 114-residue polypeptide: Large ribosomal subunit protein bL19 (114 aa).

Belongs to the bacterial ribosomal protein bL19 family.

In terms of biological role, this protein is located at the 30S-50S ribosomal subunit interface and may play a role in the structure and function of the aminoacyl-tRNA binding site. The chain is Large ribosomal subunit protein bL19 from Lactococcus lactis subsp. lactis (strain IL1403) (Streptococcus lactis).